Reading from the N-terminus, the 560-residue chain is Beta-glucosidase 26, peroxisomal (560 aa).

A beta-D-glucoside is bound by residues Gln33, His137, 182 to 183 (NE), Tyr326, Glu398, Trp450, 457 to 458 (EW), and Tyr466. Glu183 (proton donor) is an active-site residue. Residue Glu398 is the Nucleophile of the active site.

Belongs to the glycosyl hydrolase 1 family.

Its subcellular location is the peroxisome. The catalysed reaction is Hydrolysis of terminal, non-reducing beta-D-glucosyl residues with release of beta-D-glucose.. In terms of biological role, possesses beta-glucosidase activity toward 4-methyl-umbelliferyl-beta-D-glucoside in vitro. Possesses myrosinase activity toward indol-3-yl-methylglucosinolate (I3M) and 4-methoxy-indol-3-yl-methylglucosinolate (4MO-I3M) in vivo. Component of an inducible preinvasion resistance mechanism that prevents penetration of the nonhost fungal species B.graminis and E.pisi. Involved in indole glucosinolate (IGS) activation during pattern-triggered immunity (PTI). Functions as a myrosinase for the breakdown of flg22-triggered IGS. Required for both callose deposition and glucosinolate activation during pathogen-triggered resistance. During fungal attack, required for IGS activation that mediates broad-spectrum antifungal defense. The chain is Beta-glucosidase 26, peroxisomal from Arabidopsis thaliana (Mouse-ear cress).